The primary structure comprises 159 residues: Putative UPF0479 protein YDR545C-A (159 aa).

Helical transmembrane passes span 38 to 58 (IVFCLPFFPALFLVPVQKVLQ) and 135 to 155 (VPMIWLDVFQVFFVFLVISQH).

The protein belongs to the UPF0479 family.

It localises to the membrane. The chain is Putative UPF0479 protein YDR545C-A from Saccharomyces cerevisiae (strain ATCC 204508 / S288c) (Baker's yeast).